The following is a 166-amino-acid chain: Lipoprotein signal peptidase (166 aa).

Transmembrane regions (helical) follow at residues 9–29 (ASGA…FDQL), 45–65 (ALTS…FGFL), 71–91 (WQRW…CFLL), and 100–120 (FSLS…DRLV). Catalysis depends on residues Asp-126 and Asp-144. Residues 135–155 (WHFPAFNLADSAITIGAVLLI) traverse the membrane as a helical segment.

This sequence belongs to the peptidase A8 family.

It localises to the cell inner membrane. It catalyses the reaction Release of signal peptides from bacterial membrane prolipoproteins. Hydrolyzes -Xaa-Yaa-Zaa-|-(S,diacylglyceryl)Cys-, in which Xaa is hydrophobic (preferably Leu), and Yaa (Ala or Ser) and Zaa (Gly or Ala) have small, neutral side chains.. It functions in the pathway protein modification; lipoprotein biosynthesis (signal peptide cleavage). In terms of biological role, this protein specifically catalyzes the removal of signal peptides from prolipoproteins. This Burkholderia multivorans (strain ATCC 17616 / 249) protein is Lipoprotein signal peptidase.